Here is a 576-residue protein sequence, read N- to C-terminus: Proline--tRNA ligase (576 aa).

Belongs to the class-II aminoacyl-tRNA synthetase family. ProS type 1 subfamily. As to quaternary structure, homodimer.

The protein localises to the cytoplasm. It catalyses the reaction tRNA(Pro) + L-proline + ATP = L-prolyl-tRNA(Pro) + AMP + diphosphate. In terms of biological role, catalyzes the attachment of proline to tRNA(Pro) in a two-step reaction: proline is first activated by ATP to form Pro-AMP and then transferred to the acceptor end of tRNA(Pro). As ProRS can inadvertently accommodate and process non-cognate amino acids such as alanine and cysteine, to avoid such errors it has two additional distinct editing activities against alanine. One activity is designated as 'pretransfer' editing and involves the tRNA(Pro)-independent hydrolysis of activated Ala-AMP. The other activity is designated 'posttransfer' editing and involves deacylation of mischarged Ala-tRNA(Pro). The misacylated Cys-tRNA(Pro) is not edited by ProRS. The polypeptide is Proline--tRNA ligase (Trichlorobacter lovleyi (strain ATCC BAA-1151 / DSM 17278 / SZ) (Geobacter lovleyi)).